Here is a 314-residue protein sequence, read N- to C-terminus: Tetraacyldisaccharide 4'-kinase (314 aa).

54 to 61 (YIGGTGKT) contributes to the ATP binding site.

This sequence belongs to the LpxK family.

The enzyme catalyses a lipid A disaccharide + ATP = a lipid IVA + ADP + H(+). It functions in the pathway glycolipid biosynthesis; lipid IV(A) biosynthesis; lipid IV(A) from (3R)-3-hydroxytetradecanoyl-[acyl-carrier-protein] and UDP-N-acetyl-alpha-D-glucosamine: step 6/6. Functionally, transfers the gamma-phosphate of ATP to the 4'-position of a tetraacyldisaccharide 1-phosphate intermediate (termed DS-1-P) to form tetraacyldisaccharide 1,4'-bis-phosphate (lipid IVA). This chain is Tetraacyldisaccharide 4'-kinase, found in Pelagibacter ubique (strain HTCC1062).